We begin with the raw amino-acid sequence, 357 residues long: Phosphoribosylformylglycinamidine cyclo-ligase (357 aa).

Belongs to the AIR synthase family.

It localises to the cytoplasm. It catalyses the reaction 2-formamido-N(1)-(5-O-phospho-beta-D-ribosyl)acetamidine + ATP = 5-amino-1-(5-phospho-beta-D-ribosyl)imidazole + ADP + phosphate + H(+). Its pathway is purine metabolism; IMP biosynthesis via de novo pathway; 5-amino-1-(5-phospho-D-ribosyl)imidazole from N(2)-formyl-N(1)-(5-phospho-D-ribosyl)glycinamide: step 2/2. This Rhizobium johnstonii (strain DSM 114642 / LMG 32736 / 3841) (Rhizobium leguminosarum bv. viciae) protein is Phosphoribosylformylglycinamidine cyclo-ligase.